The following is a 785-amino-acid chain: Probably inactive leucine-rich repeat receptor-like protein kinase At5g58150 (785 aa).

The signal sequence occupies residues 1-21 (MRLSLWGSLLFFSFFVKHLTS). The Extracellular portion of the chain corresponds to 22 to 436 (LDPNTDAYHL…KVNKKNTGLK (415 aa)). 14 LRR repeats span residues 64 to 88 (SENV…TIGK), 89 to 112 (MSKL…LWSL), 114 to 136 (LLES…IGNF), 138 to 160 (SLHT…ISNL), 161 to 184 (VNLT…LVHC), 186 to 208 (SLLS…FGSA), 210 to 232 (PLLK…VLHE), 236 to 258 (TVDL…HKHN), 259 to 283 (WSSL…LSSA), 284 to 306 (HKLG…EIGK), 307 to 330 (LSAL…EISR), 331 to 355 (LSHL…SVKN), 357 to 377 (EVLD…LLEK), and 379 to 405 (AMMQ…TIQR). N-linked (GlcNAc...) asparagine glycosylation occurs at N119. N-linked (GlcNAc...) asparagine glycans are attached at residues N162, N198, N216, and N258. N314, N319, and N343 each carry an N-linked (GlcNAc...) asparagine glycan. 3 N-linked (GlcNAc...) asparagine glycosylation sites follow: N385, N390, and N397. A helical membrane pass occupies residues 437–457 (IGLGLAISMAFLLIGLLLILV). Residues 458–785 (ALRVRRKSRT…GLLKDISPNY (328 aa)) are Cytoplasmic-facing. Residues T510 and T518 each carry the phosphothreonine modification. Positions 521 to 785 (FDRGTMLWEG…GLLKDISPNY (265 aa)) constitute a Protein kinase domain. ATP is bound by residues 527–535 (LWEGKSGPT) and K549. 2 positions are modified to phosphotyrosine: Y594 and Y683.

It belongs to the protein kinase superfamily. Ser/Thr protein kinase family.

Its subcellular location is the cell membrane. The polypeptide is Probably inactive leucine-rich repeat receptor-like protein kinase At5g58150 (Arabidopsis thaliana (Mouse-ear cress)).